The following is a 149-amino-acid chain: UPF0178 protein Mmwyl1_2258 (149 aa).

This sequence belongs to the UPF0178 family.

This chain is UPF0178 protein Mmwyl1_2258, found in Marinomonas sp. (strain MWYL1).